A 345-amino-acid polypeptide reads, in one-letter code: Glycerol-3-phosphate dehydrogenase [NAD(P)+] (345 aa).

Positions 11, 12, 32, 33, and 105 each coordinate NADPH. Sn-glycerol 3-phosphate contacts are provided by lysine 105, glycine 136, and serine 138. An NADPH-binding site is contributed by alanine 140. Residues lysine 191, aspartate 244, serine 254, arginine 255, and asparagine 256 each coordinate sn-glycerol 3-phosphate. Lysine 191 (proton acceptor) is an active-site residue. Arginine 255 contributes to the NADPH binding site. Residues valine 279 and glutamate 281 each contribute to the NADPH site.

It belongs to the NAD-dependent glycerol-3-phosphate dehydrogenase family.

It localises to the cytoplasm. It catalyses the reaction sn-glycerol 3-phosphate + NAD(+) = dihydroxyacetone phosphate + NADH + H(+). The enzyme catalyses sn-glycerol 3-phosphate + NADP(+) = dihydroxyacetone phosphate + NADPH + H(+). It functions in the pathway membrane lipid metabolism; glycerophospholipid metabolism. Catalyzes the reduction of the glycolytic intermediate dihydroxyacetone phosphate (DHAP) to sn-glycerol 3-phosphate (G3P), the key precursor for phospholipid synthesis. This is Glycerol-3-phosphate dehydrogenase [NAD(P)+] from Halalkalibacterium halodurans (strain ATCC BAA-125 / DSM 18197 / FERM 7344 / JCM 9153 / C-125) (Bacillus halodurans).